Here is a 148-residue protein sequence, read N- to C-terminus: Lipoprotein signal peptidase (148 aa).

Helical transmembrane passes span 57–77 (QWIF…YLNT) and 80–100 (VHIF…GNLI). Active-site residues include aspartate 110 and aspartate 126. The helical transmembrane segment at 124 to 144 (IADVFVVVGTVFLCIYVLFFE) threads the bilayer.

Belongs to the peptidase A8 family.

It is found in the cell membrane. It catalyses the reaction Release of signal peptides from bacterial membrane prolipoproteins. Hydrolyzes -Xaa-Yaa-Zaa-|-(S,diacylglyceryl)Cys-, in which Xaa is hydrophobic (preferably Leu), and Yaa (Ala or Ser) and Zaa (Gly or Ala) have small, neutral side chains.. The protein operates within protein modification; lipoprotein biosynthesis (signal peptide cleavage). Its function is as follows. This protein specifically catalyzes the removal of signal peptides from prolipoproteins. The sequence is that of Lipoprotein signal peptidase from Clostridioides difficile (strain 630) (Peptoclostridium difficile).